The chain runs to 429 residues: Serine--tRNA ligase (429 aa).

234–236 (TSE) is an L-serine binding site. ATP is bound by residues 265-267 (RKE) and Val281. Glu288 contacts L-serine. Residue 352-355 (ELVS) participates in ATP binding. Thr389 serves as a coordination point for L-serine.

This sequence belongs to the class-II aminoacyl-tRNA synthetase family. Type-1 seryl-tRNA synthetase subfamily. As to quaternary structure, homodimer. The tRNA molecule probably binds across the dimer.

It catalyses the reaction tRNA(Ser) + L-serine + ATP = L-seryl-tRNA(Ser) + AMP + diphosphate + H(+). The catalysed reaction is tRNA(Sec) + L-serine + ATP = L-seryl-tRNA(Sec) + AMP + diphosphate + H(+). Its pathway is aminoacyl-tRNA biosynthesis; selenocysteinyl-tRNA(Sec) biosynthesis; L-seryl-tRNA(Sec) from L-serine and tRNA(Sec): step 1/1. Catalyzes the attachment of serine to tRNA(Ser). Is also probably able to aminoacylate tRNA(Sec) with serine, to form the misacylated tRNA L-seryl-tRNA(Sec), which will be further converted into selenocysteinyl-tRNA(Sec). This Encephalitozoon cuniculi (strain GB-M1) (Microsporidian parasite) protein is Serine--tRNA ligase.